The primary structure comprises 347 residues: Phosphate acyltransferase (347 aa).

Belongs to the PlsX family. Homodimer. Probably interacts with PlsY.

The protein localises to the cytoplasm. It carries out the reaction a fatty acyl-[ACP] + phosphate = an acyl phosphate + holo-[ACP]. It participates in lipid metabolism; phospholipid metabolism. Catalyzes the reversible formation of acyl-phosphate (acyl-PO(4)) from acyl-[acyl-carrier-protein] (acyl-ACP). This enzyme utilizes acyl-ACP as fatty acyl donor, but not acyl-CoA. In Rhizobium meliloti (strain 1021) (Ensifer meliloti), this protein is Phosphate acyltransferase.